Reading from the N-terminus, the 391-residue chain is Stearoyl-[acyl-carrier-protein] 9-desaturase 5, chloroplastic (391 aa).

The tract at residues 1-20 is disordered; that stretch reads MAFAPSHTASPSYCGVAQGG. A chloroplast-targeting transit peptide spans 1-32; sequence MAFAPSHTASPSYCGVAQGGRRSNGMSPVVAM. 6 residues coordinate Fe cation: glutamate 133, glutamate 171, histidine 174, glutamate 224, glutamate 257, and histidine 260.

This sequence belongs to the fatty acid desaturase type 2 family. Homodimer. Requires Fe(2+) as cofactor.

Its subcellular location is the plastid. The protein localises to the chloroplast. It carries out the reaction octadecanoyl-[ACP] + 2 reduced [2Fe-2S]-[ferredoxin] + O2 + 2 H(+) = (9Z)-octadecenoyl-[ACP] + 2 oxidized [2Fe-2S]-[ferredoxin] + 2 H2O. Its pathway is lipid metabolism; fatty acid metabolism. Its function is as follows. Converts stearoyl-ACP to oleoyl-ACP by introduction of a cis double bond between carbons 9 and 10 of the acyl chain. This chain is Stearoyl-[acyl-carrier-protein] 9-desaturase 5, chloroplastic, found in Oryza sativa subsp. indica (Rice).